Consider the following 230-residue polypeptide: Cytidylate kinase (230 aa).

12 to 20 (GPSGAGKGT) provides a ligand contact to ATP.

This sequence belongs to the cytidylate kinase family. Type 1 subfamily.

The protein resides in the cytoplasm. The catalysed reaction is CMP + ATP = CDP + ADP. It catalyses the reaction dCMP + ATP = dCDP + ADP. The polypeptide is Cytidylate kinase (Shewanella sp. (strain MR-4)).